The following is a 357-amino-acid chain: 3-isopropylmalate dehydrogenase (357 aa).

Substrate-binding residues include Arg97, Arg107, Arg135, and Asp224. Residues Asp224, Asp248, and Asp252 each contribute to the Mg(2+) site. 282-294 contributes to the NAD(+) binding site; the sequence is GSAPDIAGQDKAN.

Belongs to the isocitrate and isopropylmalate dehydrogenases family. LeuB type 1 subfamily. In terms of assembly, homodimer. The cofactor is Mg(2+). Mn(2+) serves as cofactor.

Its subcellular location is the cytoplasm. It catalyses the reaction (2R,3S)-3-isopropylmalate + NAD(+) = 4-methyl-2-oxopentanoate + CO2 + NADH. It functions in the pathway amino-acid biosynthesis; L-leucine biosynthesis; L-leucine from 3-methyl-2-oxobutanoate: step 3/4. Functionally, catalyzes the oxidation of 3-carboxy-2-hydroxy-4-methylpentanoate (3-isopropylmalate) to 3-carboxy-4-methyl-2-oxopentanoate. The product decarboxylates to 4-methyl-2 oxopentanoate. The sequence is that of 3-isopropylmalate dehydrogenase from Synechococcus sp. (strain CC9902).